We begin with the raw amino-acid sequence, 195 residues long: Imidazoleglycerol-phosphate dehydratase (195 aa).

This sequence belongs to the imidazoleglycerol-phosphate dehydratase family.

It localises to the cytoplasm. It carries out the reaction D-erythro-1-(imidazol-4-yl)glycerol 3-phosphate = 3-(imidazol-4-yl)-2-oxopropyl phosphate + H2O. It functions in the pathway amino-acid biosynthesis; L-histidine biosynthesis; L-histidine from 5-phospho-alpha-D-ribose 1-diphosphate: step 6/9. This is Imidazoleglycerol-phosphate dehydratase from Burkholderia ambifaria (strain MC40-6).